The following is a 165-amino-acid chain: UPF0254 protein MMP0935 (165 aa).

The protein belongs to the UPF0254 family.

The sequence is that of UPF0254 protein MMP0935 from Methanococcus maripaludis (strain DSM 14266 / JCM 13030 / NBRC 101832 / S2 / LL).